The primary structure comprises 1128 residues: Transient receptor potential-gamma protein (1128 aa).

The Cytoplasmic segment spans residues 1-325 (MMEEENTIRP…MALQAVDIIR (325 aa)). ANK repeat units follow at residues 57-86 (LGRT…DTKD) and 131-160 (PDIT…VLPM). The chain crosses the membrane as a helical span at residues 326 to 346 (IGIMFPIFSLAYILAPYSSIG). Over 347 to 403 (QTMRKPFIKFICHSASYFTFLFLLMLASQRIETFIGGWFFADSSGMLNTMEELPTKR) the chain is Extracellular. The chain crosses the membrane as a helical span at residues 404–424 (GAKPTFIEWLILAWVSGLIWS). Topologically, residues 425-444 (EVKQLWDVGLQEYLNDMWNV) are cytoplasmic. The chain crosses the membrane as a helical span at residues 445-465 (IDFVTNSLYVATVALRVVSFF). Residues 466-492 (QVQKEMIYNSHATDLPRERWDAWDPML) lie on the Extracellular side of the membrane. The helical transmembrane segment at 493–513 (ISEGLFSAANIFSSLKLVYIF) threads the bilayer. Residues 514–535 (SVNPHLGPLQVSLSRMVMDIMK) are Cytoplasmic-facing. A helical transmembrane segment spans residues 536-556 (FFFLYVLVLFAFGSGLNQLLW). The Extracellular segment spans residues 557 to 629 (YYADLEKKRC…GIKIFTRFWG (73 aa)). Residues 630–650 (MLMFGTYSVINIVVLLNLLIA) traverse the membrane as a helical segment. Residues 651-1128 (MMNHSYQLIS…SCVSTTGAIG (478 aa)) are Cytoplasmic-facing. Disordered regions lie at residues 865–898 (RQQS…TASS) and 1064–1111 (AAEA…SVNS). The span at 878-893 (ESPTTPTAPQGTQGAA) shows a compositional bias: low complexity. The span at 1085 to 1111 (TQSQHDSVETNSTFTLSIDPSNTSVNS) shows a compositional bias: polar residues.

This sequence belongs to the transient receptor (TC 1.A.4) family. STrpC subfamily. In terms of assembly, interacts preferentially with trpl and interacts to a lower extent with trp. As to expression, expressed predominantly in the rhabdomeres of photoreceptor cells.

The protein localises to the cell projection. Its subcellular location is the rhabdomere membrane. In terms of biological role, a light-sensitive calcium channel that is required for inositide-mediated Ca(2+) entry in the retina during phospholipase C (PLC)-mediated phototransduction. Forms a regulated cation channel when heteromultimerized with trpl. This Drosophila melanogaster (Fruit fly) protein is Transient receptor potential-gamma protein (Trpgamma).